Reading from the N-terminus, the 759-residue chain is 1,4-alpha-glucan branching enzyme GlgB (759 aa).

The segment at Met1–His22 is disordered. Catalysis depends on Asp422, which acts as the Nucleophile. Residue Glu475 is the Proton donor of the active site.

This sequence belongs to the glycosyl hydrolase 13 family. GlgB subfamily. As to quaternary structure, monomer.

It carries out the reaction Transfers a segment of a (1-&gt;4)-alpha-D-glucan chain to a primary hydroxy group in a similar glucan chain.. Its pathway is glycan biosynthesis; glycogen biosynthesis. Functionally, catalyzes the formation of the alpha-1,6-glucosidic linkages in glycogen by scission of a 1,4-alpha-linked oligosaccharide from growing alpha-1,4-glucan chains and the subsequent attachment of the oligosaccharide to the alpha-1,6 position. This is 1,4-alpha-glucan branching enzyme GlgB from Mycobacterium sp. (strain KMS).